Here is a 304-residue protein sequence, read N- to C-terminus: MQFSEELLTLKDQVRFDKSFKVGKYDKIVIAGMGGSGIAGRIFSEIYDEKPVFLVDDYDIPSFVDDKTEFIAISYSGNTEETISASEEAAKKHANVHAITSGGSLSKMGFDTIIIPSGLQPRSSIGYLLMPLVNTFIKPKIGDVDEAYRLLSETDKDNEEEKSIASEIYNGEHIPVIYGSRPFRAIAYRWKTQFNENAKVLAYSNYFSELNHNDTMPLKDTYRKDEFYFLVFRSDDSRFSKRITVTEKITGNSFRMVDVRGSSLLAKLFYLIHFGDYLTYHLAELRGVDPQDVSLIEKLKKEIA.

Positions 16 to 147 (FDKSFKVGKY…KPKIGDVDEA (132 aa)) constitute an SIS domain. D-fructose 6-phosphate-binding residues include G35, S36, S74, S76, T79, and R122. E196 serves as the catalytic Proton acceptor. H212 and K300 together coordinate D-fructose 6-phosphate. Residue H212 is the Proton donor of the active site. Residue K300 is the Proton acceptor of the active site.

It belongs to the PGI/PMI family. Homodimer.

The enzyme catalyses alpha-D-glucose 6-phosphate = beta-D-fructose 6-phosphate. It carries out the reaction D-mannose 6-phosphate = D-fructose 6-phosphate. Its function is as follows. Dual specificity isomerase that catalyzes the isomerization of both glucose-6-phosphate and mannose-6-phosphate to fructose-6-phosphate. This chain is Bifunctional phosphoglucose/phosphomannose isomerase, found in Thermoplasma volcanium (strain ATCC 51530 / DSM 4299 / JCM 9571 / NBRC 15438 / GSS1).